Here is a 225-residue protein sequence, read N- to C-terminus: Cytidylate kinase (225 aa).

11 to 19 (GPAAAGKST) is a binding site for ATP.

This sequence belongs to the cytidylate kinase family. Type 1 subfamily.

Its subcellular location is the cytoplasm. It carries out the reaction CMP + ATP = CDP + ADP. It catalyses the reaction dCMP + ATP = dCDP + ADP. This is Cytidylate kinase from Bacillus cereus (strain B4264).